The primary structure comprises 457 residues: Adenylosuccinate synthetase isozyme 1 (457 aa).

Positions 1–24 (MSGTRASNDRPPGTGGVKRGRLQQ) are disordered. GTP is bound by residues 42–48 (GDEGKGK) and 70–72 (GHT). D43 acts as the Proton acceptor in catalysis. Mg(2+)-binding residues include D43 and G70. Residue D43 participates in substrate binding. IMP contacts are provided by residues 43–46 (DEGK), 68–71 (NAGH), T163, R177, N256, T271, and R335. Catalysis depends on H71, which acts as the Proton donor. 331–337 (VTTGRKR) is a binding site for substrate. Residues R337, 363-365 (KLD), and 445-448 (GVGK) contribute to the GTP site.

Belongs to the adenylosuccinate synthetase family. Homodimer. The cofactor is Mg(2+). High levels in muscle.

It is found in the cytoplasm. It localises to the membrane. It carries out the reaction IMP + L-aspartate + GTP = N(6)-(1,2-dicarboxyethyl)-AMP + GDP + phosphate + 2 H(+). Its pathway is purine metabolism; AMP biosynthesis via de novo pathway; AMP from IMP: step 1/2. Weakly inhibited by AMP non-competitively to all substrates. Inhibited by IMP non-competitively with respect to GTP. Inhibited by fructose 1,6-bisphosphate competitively with respect to IMP. In terms of biological role, component of the purine nucleotide cycle (PNC), which interconverts IMP and AMP to regulate the nucleotide levels in various tissues, and which contributes to glycolysis and ammoniagenesis. Catalyzes the first committed step in the biosynthesis of AMP from IMP. This is Adenylosuccinate synthetase isozyme 1 (Adss1) from Mus musculus (Mouse).